A 185-amino-acid polypeptide reads, in one-letter code: Ribosome-recycling factor (185 aa).

Belongs to the RRF family.

The protein localises to the cytoplasm. Its function is as follows. Responsible for the release of ribosomes from messenger RNA at the termination of protein biosynthesis. May increase the efficiency of translation by recycling ribosomes from one round of translation to another. This chain is Ribosome-recycling factor, found in Citrifermentans bemidjiense (strain ATCC BAA-1014 / DSM 16622 / JCM 12645 / Bem) (Geobacter bemidjiensis).